We begin with the raw amino-acid sequence, 337 residues long: Putative 2-aminoethylphosphonate-binding periplasmic protein (337 aa).

An N-terminal signal peptide occupies residues 1 to 21 (MKLSRLALLSVFALASAPSWA).

It belongs to the bacterial solute-binding protein 1 family.

It is found in the periplasm. Its function is as follows. Probably part of the PhnSTUV complex (TC 3.A.1.11.5) involved in 2-aminoethylphosphonate import. This chain is Putative 2-aminoethylphosphonate-binding periplasmic protein (phnS), found in Salmonella typhi.